We begin with the raw amino-acid sequence, 497 residues long: MIELGQSYSTIQAMTKQKPLKSLRQRVKENQTPPNRSQNHLGILRPSFSQHSRERKMLHSTSWLDGLRGISATCVVVHHCTLQWFGWHIHEPWFPGQSFLKLPVIRLLISGSPHVYIFFVISGYSLSYKPLKLSRQGRFDEAASVLSSSIFRRHARLFVPTTIVTFFCAIMTQLNWYGKAEHMPGVAVPAWEPPHLDNIWAQLNNFAWNELLFMDPVGRTVAKGDPGEQVKQLHNPYDYVLWTLPVEFNSSMVLLMFLMAFSRVESRARMAFCLAMAVLFQCFFIYWALFLFFSGMLICDLRLELGEALSTRAPSKDTRSWSKHLFVRAIGVGCFVLSLCALSTPHLAFGGREAPGFVTLASMIPERFGDQLLMPIAAIGLVLTLDHHPFLQVLFTNSFAQYMGRISFALFLVHGPLLNTLGHALGRRFIALIGGDTEERYLVAISLTAMVFWLMTILLADFVYQYVDLASVQVSKWAYQRLLRTEEQPGKYEWKSR.

The N-linked (GlcNAc...) asparagine glycan is linked to N35. 9 consecutive transmembrane segments (helical) span residues 69 to 89 (GISATCVVVHHCTLQWFGWHI), 107 to 127 (LLISGSPHVYIFFVISGYSLS), 157 to 177 (LFVPTTIVTFFCAIMTQLNWY), 241 to 261 (LWTLPVEFNSSMVLLMFLMAF), 278 to 298 (VLFQCFFIYWALFLFFSGMLI), 329 to 349 (AIGVGCFVLSLCALSTPHLAF), 375 to 395 (PIAAIGLVLTLDHHPFLQVLF), 406 to 426 (ISFALFLVHGPLLNTLGHALG), and 443 to 463 (VAISLTAMVFWLMTILLADFV).

Belongs to the acyltransferase 3 family.

Its subcellular location is the membrane. The protein operates within mycotoxin biosynthesis. Functionally, O-acetyltransferase; part of the 2 gene clusters that mediate the biosynthesis of fusicoccins, diterpene glucosides that display phytohormone-like activity and function as potent activators of plasma membrane H(+)-ATPases in plants by modifying 14-3-3 proteins and cause the plant disease constriction canker. The first step in the pathway is performed by the fusicoccadiene synthase PaFS that possesses both prenyl transferase and terpene cyclase activity, converting isopentenyl diphosphate and dimethylallyl diphosphate into geranylgeranyl diphosphate (GGDP) and successively converting GGDP into fusicocca-2,10(14)-diene, a precursor for fusicoccin H. The second step is the oxidation at the C-8 position by the cytochrome P450 monooxygenase PaP450-2 to yield fusicocca-2,10(14)-diene-8-beta-ol. The cytochrome P450 monooxygenase PaP450-1 then catalyzes the hydroxylation at the C-16 position to produce fusicocca-2,10(14)-diene-8-beta,16-diol. The dioxygenase fc-dox then catalyzes the 16-oxydation of fusicocca-2,10(14)-diene-8-beta,16-diol to yield an aldehyde (8-beta-hydroxyfusicocca-1,10(14)-dien-16-al). The short-chain dehydrogenase/reductase fc-sdr catalyzes the reduction of the aldehyde to yield fusicocca-1,10(14)-diene-8-beta,16-diol. The next step is the hydroxylation at C-9 performed by the cytochrome P450 monooxygenase PaP450-3 that leads to fusicoccin H aglycon which is glycosylated to fusicoccin H by the O-glycosyltransferase PaGT. Hydroxylation at C-12 by the cytochrome P450 monooxygenase PaP450-4 leads then to the production of fusicoccin Q and is followed by methylation by the O-methyltransferase PaMT to yield fusicoccin P. Fusicoccin P is further converted to fusicoccin J via prenylation by the O-glucose prenyltransferase PaPT. Cytochrome P450 monooxygenase PaP450-5 then performs hydroxylation at C-19 to yield dideacetyl-fusicoccin A which is acetylated to 3'-O-deacetyl-fusicoccin A by the O-acetyltransferase PaAT-2. Finally, a another acetylation by the O-acetyltransferase PaAT-1 yields fusicoccin A. This chain is O-acetyltransferase PaAT-1, found in Phomopsis amygdali (Fusicoccum amygdali).